Here is a 649-residue protein sequence, read N- to C-terminus: MRINVDKYLFIGRKKSEFFSACRELGAVEFLAKNKLKDSENVRRISEGLKTLNLLTNKYSPSDLVLVKSGYLTTEQLLQEIFDLNHEITTITDSLKALSKEIFRVKPLGNFSSEEIRELTLKTGLSVRFFYKKHIEGAPLEVEEENVFYLATAYNYDYYVVIGVVSLSKDIFTEIEAPRSVGELREEEEHLQTLLRKKKARVCELYAYREELLEALCEQCNEQTLQHAEASTEDLFDDKVFSALGWVIVDRLTEVEKLCNSLGVYLERVQPDPDEVIPTYLENHGLGALGESLVNIYDTPASTDKDPSLWVFLSFFVFFSMIINDAGYGLIFLATSLFLSFKARKQVKHSLALKRFLKMFMILGGGCVCWGGATTSFFGVSVSYTSPFREYSLTHFLAMKKAEYYLKERPKGYKELVHDYPVLKDKKTPKEFLLAQGTSSGDSVYKAVVYDKFTDNILMEIALLVGVVHLSLGMLRYCRQRYSSIGWVVFMCGAYMYLPIYLQAVSLIHYALHVPYELGGQVGYYVTFIGLGIAVLGGIIQRGLRGLDEVTAVIQVFSDVLSYLRLYALSLAGAMVGNTVMVMSERFSPAVGVLIIIFGHTVNIALSIMGGVIHGLRLNFIEWYHYSFDGGGRLLHPLKRVICQKSQNI.

7 helical membrane-spanning segments follow: residues 312–332, 360–380, 455–475, 485–505, 520–540, 556–576, and 593–613; these read FLSF…GLIF, FMIL…FFGV, DNIL…LGML, IGWV…LQAV, GQVG…GGII, VFSD…GAMV, and VLII…GGVI.

It belongs to the V-ATPase 116 kDa subunit family.

It localises to the cell membrane. Produces ATP from ADP in the presence of a proton gradient across the membrane. The protein is V-type ATP synthase subunit I (atpI) of Chlamydia muridarum (strain MoPn / Nigg).